A 638-amino-acid chain; its full sequence is Growth hormone receptor (638 aa).

The signal sequence occupies residues Met-1 to Ala-18. Over Phe-19–Arg-264 the chain is Extracellular. The interval Gly-30 to Pro-51 is disordered. N-linked (GlcNAc...) asparagine glycosylation is present at Asn-46. 2 disulfides stabilise this stretch: Cys-56-Cys-66 and Cys-101-Cys-112. N-linked (GlcNAc...) asparagine glycosylation occurs at Asn-115. A disulfide bond links Cys-126 and Cys-140. Positions Pro-151 to Met-254 constitute a Fibronectin type-III domain. 3 N-linked (GlcNAc...) asparagine glycosylation sites follow: Asn-156, Asn-161, and Asn-200. The short motif at Tyr-240–Ser-244 is the WSXWS motif element. Residues Glu-260 to Asp-262 form a required for ADAM17-mediated proteolysis region. A helical transmembrane segment spans residues Phe-265 to Ser-288. The Cytoplasmic segment spans residues Lys-289 to Pro-638. Residues Lys-294 to Ala-379 form a required for JAK2 binding region. The Box 1 motif motif lies at Ile-297–Lys-305. The short motif at Asp-340 to Asp-349 is the UbE motif element. Ser-341 bears the Phosphoserine mark. Phosphotyrosine is present on Tyr-487. The segment at Thr-573 to Val-592 is disordered. Tyr-595 is subject to Phosphotyrosine.

Belongs to the type I cytokine receptor family. Type 1 subfamily. In terms of assembly, on growth hormone (GH) binding, forms homodimers and binds JAK2 via a box 1-containing domain. The soluble form (GHBP) is produced by phorbol ester-promoted proteolytic cleavage at the cell surface (shedding) by ADAM17/TACE. Shedding is inhibited by growth hormone (GH) binding to the receptor probably due to a conformational change in GHR rendering the receptor inaccessible to ADAM17. In terms of processing, on GH binding, phosphorylated on tyrosine residues in the cytoplasmic domain by JAK2. Post-translationally, ubiquitinated by the ECS(SOCS2) complex following ligand-binding and phosphorylation by JAK2, leading to its degradation by the proteasome. Regulation by the ECS(SOCS2) complex acts as a negative feedback loop of growth hormone receptor signaling. Ubiquitination is not sufficient for GHR internalization.

The protein localises to the cell membrane. It localises to the secreted. Its function is as follows. Receptor for pituitary gland growth hormone involved in regulating postnatal body growth. On ligand binding, couples to, and activates the JAK2/STAT5 pathway. The soluble form acts as a reservoir of growth hormone in plasma and may be a modulator/inhibitor of GH signaling. The chain is Growth hormone receptor from Oryctolagus cuniculus (Rabbit).